Here is a 237-residue protein sequence, read N- to C-terminus: U2 small nuclear ribonucleoprotein A' (237 aa).

LRR repeat units follow at residues 53–74 (RTNIVDFTNNELEELPPLGHND), 75–95 (TVHTLLLSRNRLGRLDASRLP), and 97–118 (YLVNLNLAMNRFEKFEQLQGLR). The LRRCT domain maps to 132–170 (NVICHKEQYRETVIALCPQLAVLDGERVRQAERQAAPQN). The interval 161–182 (QAERQAAPQNEKTDTPTEGPQP) is disordered.

It belongs to the U2 small nuclear ribonucleoprotein A family. In terms of assembly, associated with the spliceosome.

It localises to the nucleus. In terms of biological role, involved in pre-mRNA splicing. This Eremothecium gossypii (strain ATCC 10895 / CBS 109.51 / FGSC 9923 / NRRL Y-1056) (Yeast) protein is U2 small nuclear ribonucleoprotein A' (LEA1).